Here is a 195-residue protein sequence, read N- to C-terminus: Dephospho-CoA kinase (195 aa).

Residues 3–195 (IIGLTGSIAM…LFVIKSLLKN (193 aa)) enclose the DPCK domain. ATP is bound at residue 11–16 (AMGKST).

It belongs to the CoaE family.

It localises to the cytoplasm. It carries out the reaction 3'-dephospho-CoA + ATP = ADP + CoA + H(+). Its pathway is cofactor biosynthesis; coenzyme A biosynthesis; CoA from (R)-pantothenate: step 5/5. Catalyzes the phosphorylation of the 3'-hydroxyl group of dephosphocoenzyme A to form coenzyme A. This chain is Dephospho-CoA kinase, found in Bartonella henselae (strain ATCC 49882 / DSM 28221 / CCUG 30454 / Houston 1) (Rochalimaea henselae).